The chain runs to 278 residues: uncharacterized protein (278 aa).

The N-terminal stretch at 1 to 32 is a signal peptide; sequence MSSASFTTKALSVLAALTAASAPLVAASPAHA. Residues 33 to 236 enclose the Peptidase S1 domain; it reads LANARNVTGS…HAEWIAYYTG (204 aa). Residues Cys59 and Cys75 are joined by a disulfide bond. Catalysis depends on charge relay system residues His74, Asp123, and Ser189.

Belongs to the peptidase S1 family.

The protein localises to the secreted. This is an uncharacterized protein from Corynebacterium glutamicum (strain R).